The sequence spans 405 residues: Tryptophan synthase beta chain (405 aa).

Lysine 98 carries the N6-(pyridoxal phosphate)lysine modification.

This sequence belongs to the TrpB family. Tetramer of two alpha and two beta chains. Pyridoxal 5'-phosphate serves as cofactor.

The enzyme catalyses (1S,2R)-1-C-(indol-3-yl)glycerol 3-phosphate + L-serine = D-glyceraldehyde 3-phosphate + L-tryptophan + H2O. Its pathway is amino-acid biosynthesis; L-tryptophan biosynthesis; L-tryptophan from chorismate: step 5/5. Functionally, the beta subunit is responsible for the synthesis of L-tryptophan from indole and L-serine. This Parvibaculum lavamentivorans (strain DS-1 / DSM 13023 / NCIMB 13966) protein is Tryptophan synthase beta chain.